A 63-amino-acid chain; its full sequence is Odorranain-B1 (63 aa).

Residues 1 to 22 (MFTTKKPLLLLFFLGIISLSVC) form the signal peptide. Residues 23–41 (EQERDADEEDGGEVTEEEV) constitute a propeptide that is removed on maturation.

The protein belongs to the frog skin active peptide (FSAP) family. Brevinin subfamily. As to expression, expressed by the skin glands.

It localises to the secreted. This is Odorranain-B1 from Odorrana hainanensis (Odor frog).